A 156-amino-acid polypeptide reads, in one-letter code: Small ribosomal subunit protein uS7 (156 aa).

Belongs to the universal ribosomal protein uS7 family. As to quaternary structure, part of the 30S ribosomal subunit. Contacts proteins S9 and S11.

Functionally, one of the primary rRNA binding proteins, it binds directly to 16S rRNA where it nucleates assembly of the head domain of the 30S subunit. Is located at the subunit interface close to the decoding center, probably blocks exit of the E-site tRNA. This is Small ribosomal subunit protein uS7 from Thiomonas delicata (Thiomonas cuprina).